The primary structure comprises 82 residues: Protein CYSTEINE-RICH TRANSMEMBRANE MODULE 13 (82 aa).

The disordered stretch occupies residues 1 to 58 (MYHQEQHPVGAPPPQGYPPKDGYPPAGYPPAGYPPPGYAQGYPAQGYPPPQYSQAPQQ). Residues 26-37 (AGYPPAGYPPPG) show a composition bias toward pro residues. A helical transmembrane segment spans residues 59-76 (KQNAGMLEGCLAALCCCC).

The protein belongs to the CYSTM1 family. In terms of assembly, homodimer and heterodimers. Interacts with CYSTM7, CYTSM3, CYTSM4, CYTSM5, CYTSM6, CYTSM9, CYTSM10 and CYTSM11. Binds weakly to CYSTM1 and CYSTM2. As to expression, expressed in root meristem, root vasculature, leaf vasculature and floral organ primordia. Mostly expressed in roots and flowers and, to a lower extent, in stems, siliques and leaves.

It is found in the cell membrane. Its function is as follows. Required for the promotion of megasporogenesis, or promotion of germ cell formation from somatic precursor cells. Acts redundantly with WIH2. Functions in a genetic pathway downstream of SPL/NZZ and WUS and together with TRN2 in promoting megasporogenesis. Involved in resistance to abiotic stress. This Arabidopsis thaliana (Mouse-ear cress) protein is Protein CYSTEINE-RICH TRANSMEMBRANE MODULE 13.